We begin with the raw amino-acid sequence, 463 residues long: Adenosylhomocysteinase (463 aa).

Substrate contacts are provided by T54, D129, and E189. 190-192 (TTT) is an NAD(+) binding site. Substrate-binding residues include K219 and D223. NAD(+) is bound by residues N224, 253–258 (GYGDVG), E276, N311, 332–334 (IGH), and N377.

This sequence belongs to the adenosylhomocysteinase family. NAD(+) serves as cofactor.

It is found in the cytoplasm. It catalyses the reaction S-adenosyl-L-homocysteine + H2O = L-homocysteine + adenosine. Its pathway is amino-acid biosynthesis; L-homocysteine biosynthesis; L-homocysteine from S-adenosyl-L-homocysteine: step 1/1. May play a key role in the regulation of the intracellular concentration of adenosylhomocysteine. This is Adenosylhomocysteinase from Caulobacter vibrioides (strain ATCC 19089 / CIP 103742 / CB 15) (Caulobacter crescentus).